A 125-amino-acid polypeptide reads, in one-letter code: Cystatin-like cysteine protease inhibitor EPIC2B (125 aa).

The signal sequence occupies residues 1–21; that stretch reads MSFLRPTLALLAVTALVTTSA. Residue asparagine 45 is glycosylated (N-linked (GlcNAc...) asparagine). A Secondary area of contact motif is present at residues 68–72; the sequence is QVVSG.

The protein belongs to the cystatin family. In terms of assembly, interacts with the host papain-like cysteine protease PIP1. Interacts with the host papain-like cysteine protease RCR3. Interacts with the host papain-like cysteine protease C14.

It is found in the secreted. Its function is as follows. Secreted effector that interacts with and inhibits the pathogenesis-related papain-like cysteine proteases C14, PIP1 and RCR3 of host plants. Inhibition of host proteases by a pathogen extracellular protease inhibitor forms a specific type of defense-counterdefense mechanism between plants and microbial pathogens. This is Cystatin-like cysteine protease inhibitor EPIC2B from Phytophthora infestans (strain T30-4) (Potato late blight agent).